The sequence spans 281 residues: NADPH-dependent 7-cyano-7-deazaguanine reductase (281 aa).

A substrate-binding site is contributed by 87 to 89; the sequence is VES. NADPH is bound at residue 89 to 90; that stretch reads SK. Cys188 acts as the Thioimide intermediate in catalysis. Asp195 acts as the Proton donor in catalysis. Residue 227 to 228 participates in substrate binding; that stretch reads HE. Residue 256 to 257 coordinates NADPH; it reads RG.

The protein belongs to the GTP cyclohydrolase I family. QueF type 2 subfamily. Homodimer.

The protein localises to the cytoplasm. It carries out the reaction 7-aminomethyl-7-carbaguanine + 2 NADP(+) = 7-cyano-7-deazaguanine + 2 NADPH + 3 H(+). The protein operates within tRNA modification; tRNA-queuosine biosynthesis. In terms of biological role, catalyzes the NADPH-dependent reduction of 7-cyano-7-deazaguanine (preQ0) to 7-aminomethyl-7-deazaguanine (preQ1). The sequence is that of NADPH-dependent 7-cyano-7-deazaguanine reductase from Aliivibrio fischeri (strain MJ11) (Vibrio fischeri).